The primary structure comprises 809 residues: MLSQEEINKKLEEWPKHYNPKEIELKWQQIWLSKEYWEKVFRFKDEDEKSPVFVIDTPPPFTSGELHMGHAYWVTIADTIGRFKRLQGYNVLLPQGWDTQGLPTELKVQYRLKIPKENRELFLKKCVEWTEDMIKKMKEAMIRLGYRPEWERYEYRTYENSYRKIIQKSLLEMYKLGLIEIREGPVYWCPKCETALAQSEVGYLEKDGILAYIRFPLKDGGEIIIATTRPELLAATQAVAVHPEDERYKGLIGKIAIIPLFNKEVKIIGDDAVEKEFGTGAVMISTYGDPQDIKWQLKYNLPTTELIDEKGRIKNTNGLLDGLKIEEARKKIIELLKEKGYLVKIENFKHNVLSHTERSDCLSPIEFLVKKQIFIKTLQFKDKLLEEYKKMKFIPSRMAYYLEDWIKSLEWDWNISRQRVYGTPLPFWYCDNNHLIPAREEDLPLDPTKTKPPYEKCPQCGLPLKPVTDVADVWIDSSVTVIYLTGFYTDKRKFEKTFPASVRLQGTDIIRTWLFYTFFRTLVLTGNIPFKEVLINGQVLGPDGTRMSKSKGNVVNPLDKVDEFGADSIRLTLLDARIGDDFPFKWETVRGKKLLLQKLWNAGRLSYPFIGKKKFDRPSNLHPIDRWILQEHKRFVKKSIEAYNNYDFYQVVESLYSYFWETIADEYLELIKHRLFAEDLSALYTLSRVFKDLLIILHPIAPHITEEMYNRLYGDKISIILEGLPNVDDIEEDPNIDTLGKYIKTTTSTIRTLKIQNRIPIPVSINVKLVGPKEYIETIKRVEDDIIKTLKIEKIVYEEGEEIKAELLS.

The 'HIGH' region signature appears at proline 60–histidine 70. A 'KMSKS' region motif is present at residues arginine 546–serine 550. Lysine 549 lines the ATP pocket.

The protein belongs to the class-I aminoacyl-tRNA synthetase family. ValS type 2 subfamily.

It is found in the cytoplasm. It carries out the reaction tRNA(Val) + L-valine + ATP = L-valyl-tRNA(Val) + AMP + diphosphate. Functionally, catalyzes the attachment of valine to tRNA(Val). As ValRS can inadvertently accommodate and process structurally similar amino acids such as threonine, to avoid such errors, it has a 'posttransfer' editing activity that hydrolyzes mischarged Thr-tRNA(Val) in a tRNA-dependent manner. This is Valine--tRNA ligase from Sulfurisphaera tokodaii (strain DSM 16993 / JCM 10545 / NBRC 100140 / 7) (Sulfolobus tokodaii).